Reading from the N-terminus, the 580-residue chain is NADH-ubiquinone oxidoreductase chain 5 (580 aa).

A run of 16 helical transmembrane segments spans residues 12–32 (FYFLMSISLSLFLISLKFLLM), 50–70 (IVMTFLFDWMSLMFMSFVLLI), 92–112 (ILLVLMFVMSMMMLIISPNLI), 113–133 (SILLGWDGLGLVSYCLVIYFQ), 153–173 (VALLLAIAWMLNYGSWNYIFY), 183–203 (MMIIGGLVMLAAMTKSAQIPF), 215–235 (TPVSALVHSSTLVTAGVYLLI), 244–264 (WWMAQFLLLVSGLTMFMAGLG), 274–293 (IIALSTLSQLGLMMSILSMG), 298–320 (AFFHLLTHALFKALLFMCAGSII), 343–363 (CSCFNVANLALCGMPFLAGFY), 367–387 (LILEMVMLSYVNVFSFFLFFF), 427–447 (ICFLTVMAVIGGSMLSWLMFL), 463–483 (LFVCIVGGLMGYLISDVKLFF), 496–516 (FVGSMWFMPVISTLGVINYPL), and 560–580 (IYLLSYMLWFIILLMLVVLVN).

Belongs to the complex I subunit 5 family.

The protein localises to the mitochondrion inner membrane. The enzyme catalyses a ubiquinone + NADH + 5 H(+)(in) = a ubiquinol + NAD(+) + 4 H(+)(out). In terms of biological role, core subunit of the mitochondrial membrane respiratory chain NADH dehydrogenase (Complex I) that is believed to belong to the minimal assembly required for catalysis. Complex I functions in the transfer of electrons from NADH to the respiratory chain. The immediate electron acceptor for the enzyme is believed to be ubiquinone. The sequence is that of NADH-ubiquinone oxidoreductase chain 5 (mt:ND5) from Anopheles gambiae (African malaria mosquito).